Consider the following 1026-residue polypeptide: Multidrug resistance protein MdtC (1026 aa).

Residues 1 to 6 (MRFFAL) are Cytoplasmic-facing. A helical transmembrane segment spans residues 7–29 (FIYRPVATILIAAAITLCGILGF). Topologically, residues 30–335 (RLLPVAPLPQ…TIRASLQEVE (306 aa)) are periplasmic. A helical transmembrane segment spans residues 336 to 353 (ETLAISVALVILVVFLFL). The Cytoplasmic segment spans residues 354–359 (RSGRAT). A helical membrane pass occupies residues 360-379 (LIPAVAVPVSLIGTFAAMYL). Residues 380–388 (CGFSLNNLS) are Periplasmic-facing. The chain crosses the membrane as a helical span at residues 389-411 (LMALTIATGFVVDDAIVVLENIA). Residues 412-430 (RHLEARMKPLQAALQGTRE) lie on the Cytoplasmic side of the membrane. The helical transmembrane segment at 431–453 (VGFTVISMSLSLVAVFLPLLLMG) threads the bilayer. Topologically, residues 454-467 (GLPGRLLREFAVTL) are periplasmic. A helical transmembrane segment spans residues 468-490 (SVAIGISLVVSLTLTPMMCGWML). Topologically, residues 491–852 (KSSKPRTQPR…QVFQQTMNSQ (362 aa)) are cytoplasmic. The helical transmembrane segment at 853–875 (LILIVAAIATVYIVLGILYESYV) threads the bilayer. At 876 to 894 (HPLTILSTLPSAGVGALLA) the chain is on the periplasmic side. The chain crosses the membrane as a helical span at residues 895-917 (LELFNAPFSLIALIGIMLLIGIV). Residues 918–947 (KKNAIMMVDFALEAQRSGGLTPEQAIFQAC) lie on the Cytoplasmic side of the membrane. A helical membrane pass occupies residues 948–970 (LLRFRPIMMTTLAALFGALPLVL). Over 971 to 984 (SGGDGSELRQPLGI) the chain is Periplasmic. A helical membrane pass occupies residues 985–1007 (TIVGGLVMSQLLTLYTTPVVYLF). Residues 1008-1026 (FDRLRLRFSRKNSKPVVEI) are Cytoplasmic-facing.

It belongs to the resistance-nodulation-cell division (RND) (TC 2.A.6) family. MdtC subfamily. Part of a tripartite efflux system composed of MdtA, MdtB and MdtC. MdtC forms a heteromultimer with MdtB.

It is found in the cell inner membrane. In Salmonella typhi, this protein is Multidrug resistance protein MdtC.